The sequence spans 227 residues: Phosphoribosylformylglycinamidine synthase subunit PurQ (227 aa).

Residues 2-226 (KFAVIQFPGS…VKAWKEEQVN (225 aa)) form the Glutamine amidotransferase type-1 domain. The active-site Nucleophile is cysteine 86. Active-site residues include histidine 195 and glutamate 197.

Part of the FGAM synthase complex composed of 1 PurL, 1 PurQ and 2 PurS subunits.

Its subcellular location is the cytoplasm. The catalysed reaction is N(2)-formyl-N(1)-(5-phospho-beta-D-ribosyl)glycinamide + L-glutamine + ATP + H2O = 2-formamido-N(1)-(5-O-phospho-beta-D-ribosyl)acetamidine + L-glutamate + ADP + phosphate + H(+). It carries out the reaction L-glutamine + H2O = L-glutamate + NH4(+). It participates in purine metabolism; IMP biosynthesis via de novo pathway; 5-amino-1-(5-phospho-D-ribosyl)imidazole from N(2)-formyl-N(1)-(5-phospho-D-ribosyl)glycinamide: step 1/2. Part of the phosphoribosylformylglycinamidine synthase complex involved in the purines biosynthetic pathway. Catalyzes the ATP-dependent conversion of formylglycinamide ribonucleotide (FGAR) and glutamine to yield formylglycinamidine ribonucleotide (FGAM) and glutamate. The FGAM synthase complex is composed of three subunits. PurQ produces an ammonia molecule by converting glutamine to glutamate. PurL transfers the ammonia molecule to FGAR to form FGAM in an ATP-dependent manner. PurS interacts with PurQ and PurL and is thought to assist in the transfer of the ammonia molecule from PurQ to PurL. The sequence is that of Phosphoribosylformylglycinamidine synthase subunit PurQ from Listeria monocytogenes serotype 4b (strain CLIP80459).